The chain runs to 60 residues: Large ribosomal subunit protein uL30 (60 aa).

It belongs to the universal ribosomal protein uL30 family. As to quaternary structure, part of the 50S ribosomal subunit.

The polypeptide is Large ribosomal subunit protein uL30 (Ralstonia pickettii (strain 12J)).